Here is a 166-residue protein sequence, read N- to C-terminus: PTS system glucose-specific EIIA component (166 aa).

The region spanning 34-138 (DPVFAQKMMG…SVISPIIITN (105 aa)) is the PTS EIIA type-1 domain. Residues H71 and H86 each coordinate Zn(2+). The active-site Tele-phosphohistidine intermediate; for EIIA activity is H86. H86 carries the phosphohistidine; by HPr modification.

In terms of assembly, heterodimer with glycerol kinase (glpk). The cofactor is Zn(2+).

It localises to the cytoplasm. Its function is as follows. The phosphoenolpyruvate-dependent sugar phosphotransferase system (sugar PTS), a major carbohydrate active transport system, catalyzes the phosphorylation of incoming sugar substrates concomitantly with their translocation across the cell membrane. The enzyme II complex composed of PtsG and Crr is involved in glucose transport. In Staphylococcus aureus (strain COL), this protein is PTS system glucose-specific EIIA component (crr).